A 319-amino-acid polypeptide reads, in one-letter code: 12-(S)-hydroxy-5,8,10,14-eicosatetraenoic acid receptor (319 aa).

At 1–16 (MERTNCSAASTVVETA) the chain is on the extracellular side. A glycan (N-linked (GlcNAc...) asparagine) is linked at asparagine 5. A helical membrane pass occupies residues 17 to 37 (VGTMLTLECVLGLMGNAVALW). At 38–52 (TFFYRLKVWKPYAVY) the chain is on the cytoplasmic side. Residues 53-73 (LFNLVVADLLLATSLPFFAAF) form a helical membrane-spanning segment. Over 74–91 (YLKGKTWKLGHMPCQVLL) the chain is Extracellular. The chain crosses the membrane as a helical span at residues 92–110 (FLLAFSRGVGVAFLTTVAL). Topologically, residues 111-131 (DRYLRVVHPRLRVNLLSLRAA) are cytoplasmic. The helical transmembrane segment at 132-152 (WGISSLIWLLMVVLTPQNLLT) threads the bilayer. Topologically, residues 153-180 (CRTTQNSTECPSFYPTGGAKAIATCQEV) are extracellular. A helical membrane pass occupies residues 181–201 (LFFLQVLLPFGLISFCNSGLI). Residues 202–219 (RTLQKRLRESDKQPRIRR) lie on the Cytoplasmic side of the membrane. The chain crosses the membrane as a helical span at residues 220 to 240 (ARVLVAIVLLLFGLCFLPSVL). The Extracellular portion of the chain corresponds to 241–265 (TRVLVHIFQEFKSCSVQQAIVRASD). The chain crosses the membrane as a helical span at residues 266 to 284 (IAGSLTCLHSTLSPAIYCF). Topologically, residues 285-319 (SNPAFTHSYRKVLKSLRGRRKAAESPSDNLRDSYS) are cytoplasmic.

The protein belongs to the G-protein coupled receptor 1 family. Interacts with KRAS; in a farnesylation-dependent manner.

It is found in the cell membrane. Its function is as follows. High-affinity receptor for 12-(S)-hydroxy-5,8,10,14-eicosatetraenoic acid (12-S-HETE), with much lower affinities for other HETE isomers. 12-S-HETE is a eicosanoid, a 12-lipoxygenase (ALOX12) metabolite of arachidonic acid, involved in many physiologic and pathologic processes, such as cell growth, adhesion, inflammation and cancer promotion. 12-S-HETE-binding leads to activation of ERK1/2 (MAPK3/MAPK1), MEK, and NF-kappa-B pathways and leads to cell growth. Plays a crucial role for proliferation, survival and macropinocytosis of KRAS-dependent cancer cells by mediating the translocation of KRAS from the endoplasmic reticulum to the plasma membrane (PM) and its association with the PM. Contributes to enhanced immune responses by inducing dendrite protrusion of small intestinal CX3CR1(+) phagocytes for the uptake of luminal antigens. Also acts as a key receptor for 12-(S)-HETE-mediated liver ischemia reperfusion injury. Functionally, proton-sensing G protein-coupled receptor. This chain is 12-(S)-hydroxy-5,8,10,14-eicosatetraenoic acid receptor (Gpr31), found in Mus musculus (Mouse).